The following is a 160-amino-acid chain: Large ribosomal subunit protein uL22c (160 aa).

This sequence belongs to the universal ribosomal protein uL22 family. Part of the 50S ribosomal subunit.

The protein localises to the plastid. It localises to the chloroplast. Functionally, this protein binds specifically to 23S rRNA. In terms of biological role, the globular domain of the protein is located near the polypeptide exit tunnel on the outside of the subunit, while an extended beta-hairpin is found that lines the wall of the exit tunnel in the center of the 70S ribosome. The sequence is that of Large ribosomal subunit protein uL22c (rpl22) from Eucalyptus globulus subsp. globulus (Tasmanian blue gum).